We begin with the raw amino-acid sequence, 375 residues long: Alcohol dehydrogenase 6 (375 aa).

Ser23 bears the Phosphoserine mark. Zn(2+) is bound by residues Cys47, His69, Cys99, Cys102, Cys105, Cys113, and Cys175. Residues 200-205, Asp224, Lys229, 293-295, and Arg370 each bind NAD(+); these read GLGGVG and VGL.

Belongs to the zinc-containing alcohol dehydrogenase family. Class-V subfamily. Dimer. Zn(2+) is required as a cofactor.

It localises to the cytoplasm. It catalyses the reaction a primary alcohol + NAD(+) = an aldehyde + NADH + H(+). It carries out the reaction a secondary alcohol + NAD(+) = a ketone + NADH + H(+). Functionally, alcohol dehydrogenase. Catalyzes the NAD-dependent oxidation of primary alcohols to the corresponding aldehydes. Oxidizes secondary alcohols to the corresponding ketones. The polypeptide is Alcohol dehydrogenase 6 (ADH6) (Pongo abelii (Sumatran orangutan)).